A 1180-amino-acid polypeptide reads, in one-letter code: MTGQLIQYGRHRQRRSYARINEVLELPNLIEIQTASYQWFLDEGLREMFQDISPIQDFTGNLVLEFIDYSLGEPKYPVDESKERDVTYAAPLRVKVRLINKETGEVKEQEVFMGDFPLMTDTGTFIINGAERVIVSQLVRSPSVYYSEKIDKNGKKGYTATVIPNRGAWLELETDAKDIVYVRIDRTRKIPVTVLLRALGFGSDQEIIDLLGEDEYLRNTLEKDNTDSAEKALLEIYERLRPGEPPTVENAKSLLDSRFFDPKRYDLANVGRYKVNKKLHIKNRLFNQRLAETLIDPETGEVIAEEGSIIDRRTLDRILPYLENNVGFRTVRMSGGVVEEDEVRLQSVKIYAPDDQDGEHVIRVIGNGLVEKEIKHITPADIIASINYFFNLLHSVGGTDDIDHLGNRRLRSVGELLQNQFRIGLSRMERVVRERMSIQDPNSITPQALINIRPVIASIKEFFGSSQLSQFMDQTNPLAELTHKRRLSALGPGGLTRERAGFEVRDVHYSHYGRMCPIETPEGPNIGLINSLSTYAKVNEFGFMETPYRRVDPETGKVTAQIDYLTADEEDNYVVAQANMKLAEDGSFIDENIIARFRGENIVVSRDRVDYMDVSPKQVVSAATSCIPFLENDDSNRALMGANMQRQAVPLLVPEAPIVGTGMEHVSAKDSGAAIVSKHRGIVERVTAKEIWVRRLEEVDGKEIKGDLDKYRLQKFIRSNQGTSYNQRPIVKEGDVVEKREILADGPSMEKGEMALGRNVLVGFMTWEGYNYEDAIILSERLVKDDVYTSIHIEEYESEARDTKLGPEEITRDIPNVGEDALRNLDERGIIRVGAEVKDGDILVGKVTPKGVTELTAEERLLHAIFGEKAREVRDTSLRAPHGGDGIVLDVKIFNREDGDELPPGVNQLVRVYIVQKRKIHEGDKMAGRHGNKGVISRILPEEDMPYLPDGTPIDIMLNPLGVPSRMNIGQVLELHLGMAARRLGLHVASPVFDGASEEDVWATLEEAGMARDGKTILYDGRTGEPFDNRVSVGIMYMIKLAHMVDDKLHARSTGPYSLVTQQPLGGKAQFGGQRFGEMEVWALEAYGAAYTLQEILTVKSDDVVGRVKTYEAIVKGENVPEPGVPESFKVLIKELQSLGMDVKMLSSTEEEIEMKELDDEDEQASDKLNLNIDSTESNV.

Acidic residues predominate over residues 1154–1164 (EMKELDDEDEQ). The segment at 1154-1180 (EMKELDDEDEQASDKLNLNIDSTESNV) is disordered. Over residues 1167–1180 (DKLNLNIDSTESNV) the composition is skewed to polar residues.

The protein belongs to the RNA polymerase beta chain family. In terms of assembly, the RNAP catalytic core consists of 2 alpha, 1 beta, 1 beta' and 1 omega subunit. When a sigma factor is associated with the core the holoenzyme is formed, which can initiate transcription.

It catalyses the reaction RNA(n) + a ribonucleoside 5'-triphosphate = RNA(n+1) + diphosphate. In terms of biological role, DNA-dependent RNA polymerase catalyzes the transcription of DNA into RNA using the four ribonucleoside triphosphates as substrates. This chain is DNA-directed RNA polymerase subunit beta, found in Halalkalibacterium halodurans (strain ATCC BAA-125 / DSM 18197 / FERM 7344 / JCM 9153 / C-125) (Bacillus halodurans).